The chain runs to 293 residues: Ribosomal protein L11 methyltransferase (293 aa).

4 residues coordinate S-adenosyl-L-methionine: Thr-145, Gly-166, Asp-188, and Asn-230.

This sequence belongs to the methyltransferase superfamily. PrmA family.

Its subcellular location is the cytoplasm. It carries out the reaction L-lysyl-[protein] + 3 S-adenosyl-L-methionine = N(6),N(6),N(6)-trimethyl-L-lysyl-[protein] + 3 S-adenosyl-L-homocysteine + 3 H(+). In terms of biological role, methylates ribosomal protein L11. In Escherichia coli O8 (strain IAI1), this protein is Ribosomal protein L11 methyltransferase.